A 152-amino-acid chain; its full sequence is Flagellar assembly factor FliW (152 aa).

The protein belongs to the FliW family. Interacts with translational regulator CsrA and flagellin(s).

The protein localises to the cytoplasm. Functionally, acts as an anti-CsrA protein, binds CsrA and prevents it from repressing translation of its target genes, one of which is flagellin. Binds to flagellin and participates in the assembly of the flagellum. This chain is Flagellar assembly factor FliW, found in Caldicellulosiruptor bescii (strain ATCC BAA-1888 / DSM 6725 / KCTC 15123 / Z-1320) (Anaerocellum thermophilum).